The sequence spans 586 residues: Non-structural glycoprotein GNS (586 aa).

Residues 1–14 form the signal peptide; the sequence is MFLQLFNIVLIYGV. The Extracellular segment spans residues 15–544; the sequence is RTSQSTWINY…QNKEYWNEES (530 aa). N-linked (GlcNAc...) asparagine; by host glycosylation is found at Asn-27, Asn-68, Asn-274, Asn-350, Asn-383, Asn-476, Asn-501, and Asn-521. The chain crosses the membrane as a helical span at residues 545-562; sequence SIWGISTIITVLGIYYIY. Over 563–586 the chain is Cytoplasmic; the sequence is RKNRREKIFLNMKHRVQRFFKLDY.

This sequence belongs to the ephemerovirus glycoprotein family.

The protein resides in the host membrane. In Bos taurus (Bovine), this protein is Non-structural glycoprotein GNS (GNS).